The primary structure comprises 386 residues: Patatin-14 (386 aa).

A signal peptide spans 1 to 23; sequence MATTKSFLILFFMILATTSSTCA. The PNPLA domain maps to 32-229; the sequence is LSIDGGGIKG…TVGDPALLSL (198 aa). The GXGXXG signature appears at 36–41; that stretch reads GGGIKG. A GXSXG motif is present at residues 75–79; the sequence is GTSTG. Catalysis depends on Ser-77, which acts as the Nucleophile. N-linked (GlcNAc...) asparagine glycosylation is present at Asn-115. Asp-215 functions as the Proton acceptor in the catalytic mechanism. The DGA/G motif lies at 215-217; that stretch reads DGG. A coiled-coil region spans residues 321-381; that stretch reads ENALTGTTTE…LLSDRKKLRA (61 aa).

Belongs to the patatin family. Tuber.

It is found in the vacuole. Its function is as follows. Probable lipolytic acyl hydrolase (LAH), an activity which is thought to be involved in the response of tubers to pathogens. The protein is Patatin-14 of Solanum tuberosum (Potato).